An 819-amino-acid chain; its full sequence is uncharacterized protein (819 aa).

Position 16 is a phosphoserine (Ser16). Disordered regions lie at residues 28–83 and 96–134; these read SNTQ…PPTV and PTFTLSVSPDSQSSSATHQNDYISSPHADFSFSPPASKI. Positions 36–63 form a DNA-binding region, zn(2)-C6 fungal-type; the sequence is KIRFTENENDLSPERAQKEPVSIPHGRY. Polar residues-rich tracts occupy residues 64-77 and 96-118; these read TWSTSPDTDSSHLP and PTFTLSVSPDSQSSSATHQNDYI.

Its subcellular location is the nucleus. This is an uncharacterized protein from Schizosaccharomyces pombe (strain 972 / ATCC 24843) (Fission yeast).